The chain runs to 223 residues: Deoxyribose-phosphate aldolase (223 aa).

Asp89 (proton donor/acceptor) is an active-site residue. Lys152 functions as the Schiff-base intermediate with acetaldehyde in the catalytic mechanism. The active-site Proton donor/acceptor is Lys181.

This sequence belongs to the DeoC/FbaB aldolase family. DeoC type 1 subfamily.

The protein resides in the cytoplasm. The catalysed reaction is 2-deoxy-D-ribose 5-phosphate = D-glyceraldehyde 3-phosphate + acetaldehyde. The protein operates within carbohydrate degradation; 2-deoxy-D-ribose 1-phosphate degradation; D-glyceraldehyde 3-phosphate and acetaldehyde from 2-deoxy-alpha-D-ribose 1-phosphate: step 2/2. In terms of biological role, catalyzes a reversible aldol reaction between acetaldehyde and D-glyceraldehyde 3-phosphate to generate 2-deoxy-D-ribose 5-phosphate. The protein is Deoxyribose-phosphate aldolase of Listeria innocua serovar 6a (strain ATCC BAA-680 / CLIP 11262).